Consider the following 300-residue polypeptide: Glycine betaine/carnitine transport binding protein GbuC (300 aa).

The first 20 residues, 1–20 (MLKKLITTAVLAMLIFTLAA), serve as a signal peptide directing secretion. The N-palmitoyl cysteine moiety is linked to residue Cys-21. The S-diacylglycerol cysteine moiety is linked to residue Cys-21.

In terms of assembly, the complex is composed of two ATP-binding proteins (GbuA), two transmembrane proteins (GbuB) and a solute-binding protein (GbuC).

It localises to the cell membrane. Its activity is regulated as follows. The complex is activated by an osmotic gradient or by low temperature. Functionally, part of the ABC transporter complex GbuABC involved in glycine betaine uptake. Involved, with BetL and OpuC, in osmoprotection and cryoprotection of Listeria. Can also uptake carnitine when carnitine is abundant in the growth medium. This is Glycine betaine/carnitine transport binding protein GbuC (gbuC) from Listeria monocytogenes serotype 1/2a (strain 10403S).